The following is a 338-amino-acid chain: Ketol-acid reductoisomerase (NADP(+)) (338 aa).

Positions 1–181 constitute a KARI N-terminal Rossmann domain; that stretch reads MKVYYDKDAD…GGGKAGIIET (181 aa). Residues 24-27, R47, and S52 each bind NADP(+); that span reads YGSQ. H107 is an active-site residue. Residue G133 coordinates NADP(+). The KARI C-terminal knotted domain occupies 182 to 327; it reads NFREETETDL…EKLRAMMPWI (146 aa). Mg(2+)-binding residues include D190, E194, E226, and E230. Residue S251 coordinates substrate.

It belongs to the ketol-acid reductoisomerase family. Mg(2+) serves as cofactor.

The catalysed reaction is (2R)-2,3-dihydroxy-3-methylbutanoate + NADP(+) = (2S)-2-acetolactate + NADPH + H(+). The enzyme catalyses (2R,3R)-2,3-dihydroxy-3-methylpentanoate + NADP(+) = (S)-2-ethyl-2-hydroxy-3-oxobutanoate + NADPH + H(+). The protein operates within amino-acid biosynthesis; L-isoleucine biosynthesis; L-isoleucine from 2-oxobutanoate: step 2/4. It functions in the pathway amino-acid biosynthesis; L-valine biosynthesis; L-valine from pyruvate: step 2/4. Involved in the biosynthesis of branched-chain amino acids (BCAA). Catalyzes an alkyl-migration followed by a ketol-acid reduction of (S)-2-acetolactate (S2AL) to yield (R)-2,3-dihydroxy-isovalerate. In the isomerase reaction, S2AL is rearranged via a Mg-dependent methyl migration to produce 3-hydroxy-3-methyl-2-ketobutyrate (HMKB). In the reductase reaction, this 2-ketoacid undergoes a metal-dependent reduction by NADPH to yield (R)-2,3-dihydroxy-isovalerate. This chain is Ketol-acid reductoisomerase (NADP(+)), found in Variovorax paradoxus (strain S110).